The primary structure comprises 305 residues: Putative lipid kinase SAS0691 (305 aa).

The region spanning 3–139 (NKYTHGVLFY…YDVIKINNQY (137 aa)) is the DAGKc domain. Residues Ser44, 74–80 (GDGTVNE), and Thr101 each bind ATP. Ser220, Asp223, and Glu225 together coordinate Mg(2+). Glu281 (proton acceptor) is an active-site residue.

It belongs to the diacylglycerol/lipid kinase family. The cofactor is Mg(2+).

Functionally, may catalyze the ATP-dependent phosphorylation of lipids other than diacylglycerol (DAG). In Staphylococcus aureus (strain MSSA476), this protein is Putative lipid kinase SAS0691.